We begin with the raw amino-acid sequence, 66 residues long: Large ribosomal subunit protein bL35 (66 aa).

The segment covering 1–16 (MPKQKTHRASAKRFKR) has biased composition (basic residues). The segment at 1-20 (MPKQKTHRASAKRFKRTGSG) is disordered.

Belongs to the bacterial ribosomal protein bL35 family.

This Streptococcus thermophilus (strain CNRZ 1066) protein is Large ribosomal subunit protein bL35.